The sequence spans 289 residues: Type II methyltransferase M.MjaIII (289 aa).

Residues W9, K13, D63, and D199 each contribute to the S-adenosyl-L-methionine site.

Belongs to the N(4)/N(6)-methyltransferase family.

It catalyses the reaction a 2'-deoxyadenosine in DNA + S-adenosyl-L-methionine = an N(6)-methyl-2'-deoxyadenosine in DNA + S-adenosyl-L-homocysteine + H(+). In terms of biological role, an alpha subtype methylase that recognizes the double-stranded sequence 5'-GATC-3', methylates A-2 on both strands, and protects the DNA from cleavage by the MjaIII endonuclease. The polypeptide is Type II methyltransferase M.MjaIII (mjaIIIM) (Methanocaldococcus jannaschii (strain ATCC 43067 / DSM 2661 / JAL-1 / JCM 10045 / NBRC 100440) (Methanococcus jannaschii)).